Reading from the N-terminus, the 248-residue chain is UPF0736 protein BT9727_1080 (248 aa).

This sequence belongs to the UPF0736 family.

This Bacillus thuringiensis subsp. konkukian (strain 97-27) protein is UPF0736 protein BT9727_1080.